The following is a 284-amino-acid chain: 4-diphosphocytidyl-2-C-methyl-D-erythritol kinase (284 aa).

Residue lysine 14 is part of the active site. 97–107 (PMGGGVGGGSS) is a binding site for ATP. Aspartate 139 is a catalytic residue.

The protein belongs to the GHMP kinase family. IspE subfamily.

It carries out the reaction 4-CDP-2-C-methyl-D-erythritol + ATP = 4-CDP-2-C-methyl-D-erythritol 2-phosphate + ADP + H(+). The protein operates within isoprenoid biosynthesis; isopentenyl diphosphate biosynthesis via DXP pathway; isopentenyl diphosphate from 1-deoxy-D-xylulose 5-phosphate: step 3/6. In terms of biological role, catalyzes the phosphorylation of the position 2 hydroxy group of 4-diphosphocytidyl-2C-methyl-D-erythritol. The protein is 4-diphosphocytidyl-2-C-methyl-D-erythritol kinase of Pseudoalteromonas translucida (strain TAC 125).